A 256-amino-acid polypeptide reads, in one-letter code: Polycomb group RING finger protein 5 (256 aa).

The RING-type zinc-finger motif lies at 18–57; sequence CYICKGYLIKPTTVTECLHTFCKTCIVQHFEDSNDCPRCG. Basic and acidic residues-rich tracts occupy residues 94–103 and 110–120; these read ESEFWKKNKP and DTSKADKPKVD. A disordered region spans residues 94-133; the sequence is ESEFWKKNKPQENGQDDTSKADKPKVDEEGDENEDDKDYH.

Component of a PRC1-like complex that contains PCGF5, RNF2 and UBE2D3. Interacts with RNF2; the interaction is direct. Interacts with CBX6, CBX7 and CBX8. Interacts with AUTS2; the interaction is direct. Identified in a complex that contains AUTS2, PCGF5, CSNK2B and RNF2.

The protein resides in the nucleus. The protein localises to the nucleoplasm. Component of a Polycomb group (PcG) multiprotein PRC1-like complex, a complex class required to maintain the transcriptionally repressive state of many genes, including Hox genes, throughout development. PcG PRC1 complex acts via chromatin remodeling and modification of histones; it mediates monoubiquitination of histone H2A 'Lys-119', rendering chromatin heritably changed in its expressibility. Within the PRC1-like complex, regulates RNF2 ubiquitin ligase activity. Plays a redundant role with PCGF3 as part of a PRC1-like complex that mediates monoubiquitination of histone H2A 'Lys-119' on the X chromosome and is required for normal silencing of one copy of the X chromosome in XX females. The chain is Polycomb group RING finger protein 5 (PCGF5) from Homo sapiens (Human).